The chain runs to 405 residues: Cysteine desulfurase IscS (405 aa).

Pyridoxal 5'-phosphate is bound by residues 75-76 (AT), N155, Q183, and 203-205 (SGH). At K206 the chain carries N6-(pyridoxal phosphate)lysine. T243 is a binding site for pyridoxal 5'-phosphate. C329 acts as the Cysteine persulfide intermediate in catalysis. A [2Fe-2S] cluster-binding site is contributed by C329.

This sequence belongs to the class-V pyridoxal-phosphate-dependent aminotransferase family. NifS/IscS subfamily. Homodimer. Forms a heterotetramer with IscU, interacts with other sulfur acceptors. Requires pyridoxal 5'-phosphate as cofactor.

Its subcellular location is the cytoplasm. The catalysed reaction is (sulfur carrier)-H + L-cysteine = (sulfur carrier)-SH + L-alanine. It participates in cofactor biosynthesis; iron-sulfur cluster biosynthesis. Its function is as follows. Master enzyme that delivers sulfur to a number of partners involved in Fe-S cluster assembly, tRNA modification or cofactor biosynthesis. Catalyzes the removal of elemental sulfur atoms from cysteine to produce alanine. Functions as a sulfur delivery protein for Fe-S cluster synthesis onto IscU, an Fe-S scaffold assembly protein, as well as other S acceptor proteins. In Pseudoalteromonas translucida (strain TAC 125), this protein is Cysteine desulfurase IscS.